We begin with the raw amino-acid sequence, 154 residues long: Transcriptional repressor NrdR (154 aa).

The segment at 3-34 (CPFCGHAATQVIDTRMSEEGDTVRRRRRCESC) is a zinc-finger region. Residues 49–139 (PAVVKKNGSR…VYRSFEDLAE (91 aa)) enclose the ATP-cone domain.

It belongs to the NrdR family. Requires Zn(2+) as cofactor.

Negatively regulates transcription of bacterial ribonucleotide reductase nrd genes and operons by binding to NrdR-boxes. This is Transcriptional repressor NrdR from Ralstonia pickettii (strain 12J).